The chain runs to 148 residues: Transcriptional repressor NrdR (148 aa).

A zinc finger lies at 3–34; it reads CPFCHNEDTQVLDTRVSDEGDTIRRRRRCAKC. The 91-residue stretch at 49 to 139 folds into the ATP-cone domain; it reads PAIVKKNGSR…VYRSFADIES (91 aa).

The protein belongs to the NrdR family. The cofactor is Zn(2+).

Functionally, negatively regulates transcription of bacterial ribonucleotide reductase nrd genes and operons by binding to NrdR-boxes. This chain is Transcriptional repressor NrdR, found in Polynucleobacter necessarius subsp. necessarius (strain STIR1).